Reading from the N-terminus, the 644-residue chain is Protein cueball (644 aa).

Residues 1–26 form the signal peptide; that stretch reads MIRIRFGMDVLLVLLLATCLLSPTHG. At 27–531 the chain is on the extracellular side; that stretch reads TPLEWDFAVT…VCLTPTVWTS (505 aa). N-linked (GlcNAc...) asparagine glycosylation is found at asparagine 82 and asparagine 108. LDL-receptor class B repeat units lie at residues 121–166, 167–211, and 212–257; these read TNLF…DVCR, RKLY…DQLS, and DRLF…TNDA. 2 N-linked (GlcNAc...) asparagine glycosylation sites follow: asparagine 175 and asparagine 190. An N-linked (GlcNAc...) asparagine glycan is attached at asparagine 313. EGF-like domains follow at residues 398–430 and 433–471; these read EIRE…FTGE and EVSV…ARCE. Intrachain disulfides connect cysteine 402–cysteine 411, cysteine 406–cysteine 421, cysteine 437–cysteine 447, cysteine 441–cysteine 459, and cysteine 461–cysteine 470. 2 N-linked (GlcNAc...) asparagine glycosylation sites follow: asparagine 473 and asparagine 508. Residues 532–552 form a helical membrane-spanning segment; that stretch reads SVIIILVVGIVSSLLLVAVIV. Topologically, residues 553 to 644 are cytoplasmic; it reads HGIRRLYKPK…LIHNMEDDLY (92 aa).

This sequence belongs to the cueball family.

The protein resides in the cell membrane. Its function is as follows. Has a role in spermatogenesis and oogenesis. The chain is Protein cueball from Drosophila yakuba (Fruit fly).